A 661-amino-acid chain; its full sequence is Glycogen debranching enzyme (661 aa).

The active-site Nucleophile is the Asp338. Catalysis depends on Glu373, which acts as the Proton donor. The segment at 460 to 481 (NQLNGEGNRDGSDRNFSNNHGV) is disordered.

It belongs to the glycosyl hydrolase 13 family.

It catalyses the reaction Hydrolysis of (1-&gt;6)-alpha-D-glucosidic linkages to branches with degrees of polymerization of three or four glucose residues in limit dextrin.. It functions in the pathway glycan degradation; glycogen degradation. In terms of biological role, removes maltotriose and maltotetraose chains that are attached by 1,6-alpha-linkage to the limit dextrin main chain, generating a debranched limit dextrin. This is Glycogen debranching enzyme from Serratia proteamaculans (strain 568).